Consider the following 490-residue polypeptide: GTPase Der (490 aa).

The 165-residue stretch at 1 to 165 (MRIAILGRPN…RIRQVAEIPL (165 aa)) folds into the EngA-type G 1 domain. Residues 7-14 (GRPNVGKS), 54-58 (DTGGV), and 117-120 (NKAD) contribute to the GTP site. Residues 165–184 (LPSAEEQENTQEEEFSSKES) are disordered. Positions 169–178 (EEQENTQEEE) are enriched in acidic residues. Positions 227 to 400 (LKVALIGHPN…AVDDVYTIAT (174 aa)) constitute an EngA-type G 2 domain. GTP contacts are provided by residues 233-240 (GHPNVGKS), 280-284 (DTAGL), and 345-348 (NKWD). Residues 401–485 (TKLSTSLVNK…PFDLEYKAKP (85 aa)) enclose the KH-like domain.

It belongs to the TRAFAC class TrmE-Era-EngA-EngB-Septin-like GTPase superfamily. EngA (Der) GTPase family. In terms of assembly, associates with the 50S ribosomal subunit.

Its function is as follows. GTPase that plays an essential role in the late steps of ribosome biogenesis. The polypeptide is GTPase Der (Chlamydia muridarum (strain MoPn / Nigg)).